The following is a 1111-amino-acid chain: Phytochrome C (1111 aa).

The 181-residue stretch at 213–393 folds into the GAF domain; that stretch reads NMLLLCDALV…VFGVQINKEA (181 aa). Cys318 is a phytochromobilin binding site. 2 consecutive PAS domains span residues 604–674 and 737–808; these read IVNE…LEGS and DYAR…TKLR. The region spanning 889–1111 is the Histidine kinase domain; the sequence is YLRHEVKDPE…FVILTEFPLI (223 aa).

The protein belongs to the phytochrome family. As to quaternary structure, homodimer. In terms of processing, contains one covalently linked phytochromobilin chromophore.

Functionally, regulatory photoreceptor which exists in two forms that are reversibly interconvertible by light: the Pr form that absorbs maximally in the red region of the spectrum and the Pfr form that absorbs maximally in the far-red region. Photoconversion of Pr to Pfr induces an array of morphogenic responses, whereas reconversion of Pfr to Pr cancels the induction of those responses. Pfr controls the expression of a number of nuclear genes including those encoding the small subunit of ribulose-bisphosphate carboxylase, chlorophyll A/B binding protein, protochlorophyllide reductase, rRNA, etc. It also controls the expression of its own gene(s) in a negative feedback fashion. This is Phytochrome C (PHYC) from Arabidopsis thaliana (Mouse-ear cress).